The primary structure comprises 544 residues: CTP synthase (544 aa).

Residues 1–266 (MTKFIFVTGG…DDLICERFGL (266 aa)) are amidoligase domain. S13 serves as a coordination point for CTP. S13 provides a ligand contact to UTP. ATP is bound by residues 14 to 19 (SLGKGI) and D71. Mg(2+) contacts are provided by D71 and E140. CTP contacts are provided by residues 147–149 (DIE), 187–192 (KTKPTQ), and K223. UTP-binding positions include 187-192 (KTKPTQ) and K223. The region spanning 291–543 (TVAMVGKYVE…VKAAKNYSEA (253 aa)) is the Glutamine amidotransferase type-1 domain. G354 contacts L-glutamine. The active-site Nucleophile; for glutamine hydrolysis is C381. L-glutamine-binding positions include 382-385 (LGMQ), E404, and R471. Residues H516 and E518 contribute to the active site.

The protein belongs to the CTP synthase family. Homotetramer.

The catalysed reaction is UTP + L-glutamine + ATP + H2O = CTP + L-glutamate + ADP + phosphate + 2 H(+). It carries out the reaction L-glutamine + H2O = L-glutamate + NH4(+). It catalyses the reaction UTP + NH4(+) + ATP = CTP + ADP + phosphate + 2 H(+). It participates in pyrimidine metabolism; CTP biosynthesis via de novo pathway; CTP from UDP: step 2/2. Allosterically activated by GTP, when glutamine is the substrate; GTP has no effect on the reaction when ammonia is the substrate. The allosteric effector GTP functions by stabilizing the protein conformation that binds the tetrahedral intermediate(s) formed during glutamine hydrolysis. Inhibited by the product CTP, via allosteric rather than competitive inhibition. In terms of biological role, catalyzes the ATP-dependent amination of UTP to CTP with either L-glutamine or ammonia as the source of nitrogen. Regulates intracellular CTP levels through interactions with the four ribonucleotide triphosphates. In Psychrobacter cryohalolentis (strain ATCC BAA-1226 / DSM 17306 / VKM B-2378 / K5), this protein is CTP synthase.